A 373-amino-acid polypeptide reads, in one-letter code: NADH-quinone oxidoreductase subunit D (373 aa).

It belongs to the complex I 49 kDa subunit family. NDH-1 is composed of 14 different subunits. Subunits NuoB, C, D, E, F, and G constitute the peripheral sector of the complex.

Its subcellular location is the cell inner membrane. The enzyme catalyses a quinone + NADH + 5 H(+)(in) = a quinol + NAD(+) + 4 H(+)(out). Its function is as follows. NDH-1 shuttles electrons from NADH, via FMN and iron-sulfur (Fe-S) centers, to quinones in the respiratory chain. The immediate electron acceptor for the enzyme in this species is believed to be ubiquinone. Couples the redox reaction to proton translocation (for every two electrons transferred, four hydrogen ions are translocated across the cytoplasmic membrane), and thus conserves the redox energy in a proton gradient. In Syntrophobacter fumaroxidans (strain DSM 10017 / MPOB), this protein is NADH-quinone oxidoreductase subunit D.